The primary structure comprises 73 residues: Protein F9 homolog (73 aa).

Topologically, residues Gly1–Pro34 are virion surface. The chain crosses the membrane as a helical span at residues Trp35 to Leu55. Residues Arg56 to Ala73 lie on the Intravirion side of the membrane.

Belongs to the chordopoxvirinae L1 protein family.

It localises to the virion membrane. The chain is Protein F9 homolog from Capra hircus (Goat).